The following is a 221-amino-acid chain: GTP cyclohydrolase III (221 aa).

Belongs to the archaeal-type GTP cyclohydrolase family.

It catalyses the reaction GTP + 3 H2O = 2-amino-5-formylamino-6-(5-phospho-D-ribosylamino)pyrimidin-4(3H)-one + 2 phosphate + 2 H(+). Its function is as follows. Catalyzes the formation of 2-amino-5-formylamino-6-ribofuranosylamino-4(3H)-pyrimidinone ribonucleotide monophosphate and inorganic phosphate from GTP. Also has an independent pyrophosphate phosphohydrolase activity. The sequence is that of GTP cyclohydrolase III from Pyrobaculum aerophilum (strain ATCC 51768 / DSM 7523 / JCM 9630 / CIP 104966 / NBRC 100827 / IM2).